The chain runs to 268 residues: Large ribosomal subunit protein mL46 (268 aa).

The N-terminal 25 residues, 1–25, are a transit peptide targeting the mitochondrion; the sequence is MYLKRNIINMQRSFSRQFHISVRNS.

The protein belongs to the mitochondrion-specific ribosomal protein mL46 family. As to quaternary structure, component of the mitochondrial large ribosomal subunit (mt-LSU). Mature yeast 74S mitochondrial ribosomes consist of a small (37S) and a large (54S) subunit. The 37S small subunit contains a 15S ribosomal RNA (15S mt-rRNA) and at least 32 different proteins. The 54S large subunit contains a 21S rRNA (21S mt-rRNA) and at least 45 different proteins.

Its subcellular location is the mitochondrion. In terms of biological role, component of the mitochondrial ribosome (mitoribosome), a dedicated translation machinery responsible for the synthesis of mitochondrial genome-encoded proteins, including at least some of the essential transmembrane subunits of the mitochondrial respiratory chain. The mitoribosomes are attached to the mitochondrial inner membrane and translation products are cotranslationally integrated into the membrane. The polypeptide is Large ribosomal subunit protein mL46 (mrpl17) (Schizosaccharomyces pombe (strain 972 / ATCC 24843) (Fission yeast)).